We begin with the raw amino-acid sequence, 237 residues long: 2-C-methyl-D-erythritol 4-phosphate cytidylyltransferase (237 aa).

This sequence belongs to the IspD/TarI cytidylyltransferase family. IspD subfamily.

It catalyses the reaction 2-C-methyl-D-erythritol 4-phosphate + CTP + H(+) = 4-CDP-2-C-methyl-D-erythritol + diphosphate. Its pathway is isoprenoid biosynthesis; isopentenyl diphosphate biosynthesis via DXP pathway; isopentenyl diphosphate from 1-deoxy-D-xylulose 5-phosphate: step 2/6. Its function is as follows. Catalyzes the formation of 4-diphosphocytidyl-2-C-methyl-D-erythritol from CTP and 2-C-methyl-D-erythritol 4-phosphate (MEP). This is 2-C-methyl-D-erythritol 4-phosphate cytidylyltransferase from Vibrio vulnificus (strain CMCP6).